Reading from the N-terminus, the 1349-residue chain is DNA-directed RNA polymerase subunit beta' (1349 aa).

C219, C293, C300, and C303 together coordinate Zn(2+). Residues 1298 to 1349 (LDSPTLGESGFGSRRAERSVLDDEDELIADEVVDDDDFEEEEEDDEDDFDDE) are disordered. The span at 1319 to 1349 (DDEDELIADEVVDDDDFEEEEEDDEDDFDDE) shows a compositional bias: acidic residues.

This sequence belongs to the RNA polymerase beta' chain family. RpoC2 subfamily. As to quaternary structure, in cyanobacteria the RNAP catalytic core is composed of 2 alpha, 1 beta, 1 beta', 1 gamma and 1 omega subunit. When a sigma factor is associated with the core the holoenzyme is formed, which can initiate transcription. Zn(2+) serves as cofactor.

It carries out the reaction RNA(n) + a ribonucleoside 5'-triphosphate = RNA(n+1) + diphosphate. In terms of biological role, DNA-dependent RNA polymerase catalyzes the transcription of DNA into RNA using the four ribonucleoside triphosphates as substrates. The polypeptide is DNA-directed RNA polymerase subunit beta' (Nostoc punctiforme (strain ATCC 29133 / PCC 73102)).